The chain runs to 655 residues: Acetyl-coenzyme A synthetase (655 aa).

Residues 196-199 (RGGK) and Thr316 contribute to the CoA site. ATP-binding positions include 392–394 (GEP), 416–421 (DTWWQT), Asp507, and Arg522. Residue Ser530 coordinates CoA. Arg533 contacts ATP. Mg(2+)-binding residues include Val544 and Val549. Lys619 is modified (N6-acetyllysine).

Belongs to the ATP-dependent AMP-binding enzyme family. Mg(2+) is required as a cofactor. In terms of processing, acetylated. Deacetylation by the SIR2-homolog deacetylase activates the enzyme.

The enzyme catalyses acetate + ATP + CoA = acetyl-CoA + AMP + diphosphate. Its function is as follows. Catalyzes the conversion of acetate into acetyl-CoA (AcCoA), an essential intermediate at the junction of anabolic and catabolic pathways. AcsA undergoes a two-step reaction. In the first half reaction, AcsA combines acetate with ATP to form acetyl-adenylate (AcAMP) intermediate. In the second half reaction, it can then transfer the acetyl group from AcAMP to the sulfhydryl group of CoA, forming the product AcCoA. The protein is Acetyl-coenzyme A synthetase of Thiobacillus denitrificans (strain ATCC 25259 / T1).